A 146-amino-acid chain; its full sequence is Ribosome maturation factor RimP (146 aa).

This sequence belongs to the RimP family.

Its subcellular location is the cytoplasm. Its function is as follows. Required for maturation of 30S ribosomal subunits. The polypeptide is Ribosome maturation factor RimP (Helicobacter pylori (strain G27)).